A 102-amino-acid chain; its full sequence is Protein Tat (102 aa).

The interval 1-24 (MEPVDPRLEPWKHPGSQPKTACNN) is interaction with human CREBBP. The transactivation stretch occupies residues 1 to 48 (MEPVDPRLEPWKHPGSQPKTACNNCYCKKCCYHCQVCFLTKGLGISYG). Positions 22, 25, and 27 each coordinate Zn(2+). The segment at 22–37 (CNNCYCKKCCYHCQVC) is cysteine-rich. Lys-28 carries the N6-acetyllysine; by host PCAF modification. Cys-30, His-33, Cys-34, and Cys-37 together coordinate Zn(2+). Residues 38-48 (FLTKGLGISYG) form a core region. Residues 48–102 (GRKKRRQRRGPPQGSQTHQVSLSKQPTSQPRGDPTGPKESKEKVERETETDPAVQ) are disordered. The Nuclear localization signal, RNA-binding (TAR), and protein transduction motif lies at 49–57 (RKKRRQRRG). The segment at 49-86 (RKKRRQRRGPPQGSQTHQVSLSKQPTSQPRGDPTGPKE) is interaction with the host capping enzyme RNGTT. N6-acetyllysine; by host EP300 and GCN5L2 occurs at positions 50 and 51. Asymmetric dimethylarginine; by host PRMT6 occurs at positions 52 and 53. Residues 62 to 77 (SQTHQVSLSKQPTSQP) are compositionally biased toward polar residues. Residue Lys-71 forms a Glycyl lysine isopeptide (Lys-Gly) (interchain with G-Cter in ubiquitin) linkage. The Cell attachment site motif lies at 78 to 80 (RGD). Over residues 83 to 96 (GPKESKEKVERETE) the composition is skewed to basic and acidic residues.

It belongs to the lentiviruses Tat family. Interacts with host CCNT1. Associates with the P-TEFb complex composed at least of Tat, P-TEFb (CDK9 and CCNT1), TAR RNA, RNA Pol II. Recruits the HATs CREBBP, TAF1/TFIID, EP300, PCAF and GCN5L2. Interacts with host KAT5/Tip60; this interaction targets the latter to degradation. Interacts with the host deacetylase SIRT1. Interacts with host capping enzyme RNGTT; this interaction stimulates RNGTT. Binds to host KDR, and to the host integrins ITGAV/ITGB3 and ITGA5/ITGB1. Interacts with host KPNB1/importin beta-1 without previous binding to KPNA1/importin alpha-1. Interacts with EIF2AK2. Interacts with host nucleosome assembly protein NAP1L1; this interaction may be required for the transport of Tat within the nucleus, since the two proteins interact at the nuclear rim. Interacts with host C1QBP/SF2P32; this interaction involves lysine-acetylated Tat. Interacts with the host chemokine receptors CCR2, CCR3 and CXCR4. Interacts with host DPP4/CD26; this interaction may trigger an anti-proliferative effect. Interacts with host LDLR. Interacts with the host extracellular matrix metalloproteinase MMP1. Interacts with host PRMT6; this interaction mediates Tat's methylation. Interacts with, and is ubiquitinated by MDM2/Hdm2. Interacts with host PSMC3 and HTATIP2. Interacts with STAB1; this interaction may overcome SATB1-mediated repression of IL2 and IL2RA (interleukin) in T cells by binding to the same domain than HDAC1. Interacts (when acetylated) with human CDK13, thereby increasing HIV-1 mRNA splicing and promoting the production of the doubly spliced HIV-1 protein Nef. Interacts with host TBP; this interaction modulates the activity of transcriptional pre-initiation complex. Interacts with host RELA. Interacts with host PLSCR1; this interaction negatively regulates Tat transactivation activity by altering its subcellular distribution. In terms of processing, asymmetrical arginine methylation by host PRMT6 seems to diminish the transactivation capacity of Tat and affects the interaction with host CCNT1. Acetylation by EP300, CREBBP, GCN5L2/GCN5 and PCAF regulates the transactivation activity of Tat. EP300-mediated acetylation of Lys-50 promotes dissociation of Tat from the TAR RNA through the competitive binding to PCAF's bromodomain. In addition, the non-acetylated Tat's N-terminus can also interact with PCAF. PCAF-mediated acetylation of Lys-28 enhances Tat's binding to CCNT1. Lys-50 is deacetylated by SIRT1. Post-translationally, polyubiquitination by host MDM2 does not target Tat to degradation, but activates its transactivation function and fosters interaction with CCNT1 and TAR RNA. In terms of processing, phosphorylated by EIF2AK2 on serine and threonine residues adjacent to the basic region important for TAR RNA binding and function. Phosphorylation of Tat by EIF2AK2 is dependent on the prior activation of EIF2AK2 by dsRNA.

It is found in the host nucleus. Its subcellular location is the host nucleolus. The protein resides in the host cytoplasm. The protein localises to the secreted. Its function is as follows. Transcriptional activator that increases RNA Pol II processivity, thereby increasing the level of full-length viral transcripts. Recognizes a hairpin structure at the 5'-LTR of the nascent viral mRNAs referred to as the transactivation responsive RNA element (TAR) and recruits the cyclin T1-CDK9 complex (P-TEFb complex) that will in turn hyperphosphorylate the RNA polymerase II to allow efficient elongation. The CDK9 component of P-TEFb and other Tat-activated kinases hyperphosphorylate the C-terminus of RNA Pol II that becomes stabilized and much more processive. Other factors such as HTATSF1/Tat-SF1, SUPT5H/SPT5, and HTATIP2 are also important for Tat's function. Besides its effect on RNA Pol II processivity, Tat induces chromatin remodeling of proviral genes by recruiting the histone acetyltransferases (HATs) CREBBP, EP300 and PCAF to the chromatin. This also contributes to the increase in proviral transcription rate, especially when the provirus integrates in transcriptionally silent region of the host genome. To ensure maximal activation of the LTR, Tat mediates nuclear translocation of NF-kappa-B by interacting with host RELA. Through its interaction with host TBP, Tat may also modulate transcription initiation. Tat can reactivate a latently infected cell by penetrating in it and transactivating its LTR promoter. In the cytoplasm, Tat is thought to act as a translational activator of HIV-1 mRNAs. Functionally, extracellular circulating Tat can be endocytosed by surrounding uninfected cells via the binding to several surface receptors such as CD26, CXCR4, heparan sulfate proteoglycans (HSPG) or LDLR. Neurons are rarely infected, but they internalize Tat via their LDLR. Through its interaction with nuclear HATs, Tat is potentially able to control the acetylation-dependent cellular gene expression. Modulates the expression of many cellular genes involved in cell survival, proliferation or in coding for cytokines or cytokine receptors. Tat plays a role in T-cell and neurons apoptosis. Tat induced neurotoxicity and apoptosis probably contribute to neuroAIDS. Circulating Tat also acts as a chemokine-like and/or growth factor-like molecule that binds to specific receptors on the surface of the cells, affecting many cellular pathways. In the vascular system, Tat binds to ITGAV/ITGB3 and ITGA5/ITGB1 integrins dimers at the surface of endothelial cells and competes with bFGF for heparin-binding sites, leading to an excess of soluble bFGF. This Human immunodeficiency virus type 1 group M subtype B (isolate RF/HAT3) (HIV-1) protein is Protein Tat.